Consider the following 98-residue polypeptide: NADH-ubiquinone oxidoreductase chain 4L (98 aa).

3 helical membrane passes run Met-1–Met-21, Ala-29–Leu-49, and Ile-61–Val-81.

Belongs to the complex I subunit 4L family. In terms of assembly, core subunit of respiratory chain NADH dehydrogenase (Complex I) which is composed of 45 different subunits.

It is found in the mitochondrion inner membrane. It catalyses the reaction a ubiquinone + NADH + 5 H(+)(in) = a ubiquinol + NAD(+) + 4 H(+)(out). Functionally, core subunit of the mitochondrial membrane respiratory chain NADH dehydrogenase (Complex I) which catalyzes electron transfer from NADH through the respiratory chain, using ubiquinone as an electron acceptor. Part of the enzyme membrane arm which is embedded in the lipid bilayer and involved in proton translocation. This chain is NADH-ubiquinone oxidoreductase chain 4L (MT-ND4L), found in Eschrichtius robustus (California gray whale).